A 200-amino-acid chain; its full sequence is Pyridoxal 5'-phosphate synthase subunit PdxT (200 aa).

52–54 is an L-glutamine binding site; it reads GES. The active-site Nucleophile is Cys-84. Residues Arg-116 and 145–146 contribute to the L-glutamine site; that span reads IR. Catalysis depends on charge relay system residues His-181 and Glu-183.

Belongs to the glutaminase PdxT/SNO family. As to quaternary structure, in the presence of PdxS, forms a dodecamer of heterodimers. Only shows activity in the heterodimer.

It catalyses the reaction aldehydo-D-ribose 5-phosphate + D-glyceraldehyde 3-phosphate + L-glutamine = pyridoxal 5'-phosphate + L-glutamate + phosphate + 3 H2O + H(+). It carries out the reaction L-glutamine + H2O = L-glutamate + NH4(+). The protein operates within cofactor biosynthesis; pyridoxal 5'-phosphate biosynthesis. Its function is as follows. Catalyzes the hydrolysis of glutamine to glutamate and ammonia as part of the biosynthesis of pyridoxal 5'-phosphate. The resulting ammonia molecule is channeled to the active site of PdxS. The polypeptide is Pyridoxal 5'-phosphate synthase subunit PdxT (Saccharolobus islandicus (strain M.16.27) (Sulfolobus islandicus)).